We begin with the raw amino-acid sequence, 337 residues long: tRNA N6-adenosine threonylcarbamoyltransferase (337 aa).

Fe cation is bound by residues His-111 and His-115. Substrate is bound by residues 134-138 (LVSGG), Asp-167, Gly-180, and Asn-272. Fe cation is bound at residue Asp-300.

It belongs to the KAE1 / TsaD family. Requires Fe(2+) as cofactor.

Its subcellular location is the cytoplasm. It catalyses the reaction L-threonylcarbamoyladenylate + adenosine(37) in tRNA = N(6)-L-threonylcarbamoyladenosine(37) in tRNA + AMP + H(+). In terms of biological role, required for the formation of a threonylcarbamoyl group on adenosine at position 37 (t(6)A37) in tRNAs that read codons beginning with adenine. Is involved in the transfer of the threonylcarbamoyl moiety of threonylcarbamoyl-AMP (TC-AMP) to the N6 group of A37, together with TsaE and TsaB. TsaD likely plays a direct catalytic role in this reaction. In Shewanella sediminis (strain HAW-EB3), this protein is tRNA N6-adenosine threonylcarbamoyltransferase.